Consider the following 348-residue polypeptide: Probable dual-specificity RNA methyltransferase RlmN (348 aa).

Glutamate 93 acts as the Proton acceptor in catalysis. The Radical SAM core domain maps to 99-333 (TEKRLTACLS…VSLRKSRGSD (235 aa)). Cysteine 106 and cysteine 338 are disulfide-bonded. Residues cysteine 113, cysteine 117, and cysteine 120 each contribute to the [4Fe-4S] cluster site. Residues 160–161 (GE), serine 190, 219–221 (SLH), and asparagine 295 each bind S-adenosyl-L-methionine. The active-site S-methylcysteine intermediate is cysteine 338.

The protein belongs to the radical SAM superfamily. RlmN family. It depends on [4Fe-4S] cluster as a cofactor.

The protein localises to the cytoplasm. The enzyme catalyses adenosine(2503) in 23S rRNA + 2 reduced [2Fe-2S]-[ferredoxin] + 2 S-adenosyl-L-methionine = 2-methyladenosine(2503) in 23S rRNA + 5'-deoxyadenosine + L-methionine + 2 oxidized [2Fe-2S]-[ferredoxin] + S-adenosyl-L-homocysteine. The catalysed reaction is adenosine(37) in tRNA + 2 reduced [2Fe-2S]-[ferredoxin] + 2 S-adenosyl-L-methionine = 2-methyladenosine(37) in tRNA + 5'-deoxyadenosine + L-methionine + 2 oxidized [2Fe-2S]-[ferredoxin] + S-adenosyl-L-homocysteine. In terms of biological role, specifically methylates position 2 of adenine 2503 in 23S rRNA and position 2 of adenine 37 in tRNAs. The protein is Probable dual-specificity RNA methyltransferase RlmN of Prochlorococcus marinus (strain MIT 9515).